Consider the following 191-residue polypeptide: Protein GrpE (191 aa).

The protein belongs to the GrpE family. Homodimer.

Its subcellular location is the cytoplasm. Its function is as follows. Participates actively in the response to hyperosmotic and heat shock by preventing the aggregation of stress-denatured proteins, in association with DnaK and GrpE. It is the nucleotide exchange factor for DnaK and may function as a thermosensor. Unfolded proteins bind initially to DnaJ; upon interaction with the DnaJ-bound protein, DnaK hydrolyzes its bound ATP, resulting in the formation of a stable complex. GrpE releases ADP from DnaK; ATP binding to DnaK triggers the release of the substrate protein, thus completing the reaction cycle. Several rounds of ATP-dependent interactions between DnaJ, DnaK and GrpE are required for fully efficient folding. The polypeptide is Protein GrpE (Nitratidesulfovibrio vulgaris (strain ATCC 29579 / DSM 644 / CCUG 34227 / NCIMB 8303 / VKM B-1760 / Hildenborough) (Desulfovibrio vulgaris)).